Consider the following 510-residue polypeptide: GMP synthase [glutamine-hydrolyzing] (510 aa).

A Glutamine amidotransferase type-1 domain is found at 5–195; the sequence is LVIVLDFGGQ…LFNIADLSAD (191 aa). The active-site Nucleophile is Cys-82. Catalysis depends on residues His-169 and Glu-171. Positions 196 to 385 constitute a GMPS ATP-PPase domain; that stretch reads WTMGSYIEET…LGLHREIVER (190 aa). 223–229 is an ATP binding site; sequence SGGIDST.

Homodimer.

It carries out the reaction XMP + L-glutamine + ATP + H2O = GMP + L-glutamate + AMP + diphosphate + 2 H(+). It functions in the pathway purine metabolism; GMP biosynthesis; GMP from XMP (L-Gln route): step 1/1. Its function is as follows. Catalyzes the synthesis of GMP from XMP. This Natranaerobius thermophilus (strain ATCC BAA-1301 / DSM 18059 / JW/NM-WN-LF) protein is GMP synthase [glutamine-hydrolyzing].